Consider the following 290-residue polypeptide: Diaminopimelate epimerase (290 aa).

Residues asparagine 11 and asparagine 78 each contribute to the substrate site. Cysteine 87 acts as the Proton donor in catalysis. Substrate contacts are provided by residues 88–89 (GN), asparagine 163, asparagine 199, and 217–218 (ER). The active-site Proton acceptor is cysteine 226. Substrate is bound at residue 227 to 228 (GT).

It belongs to the diaminopimelate epimerase family. In terms of assembly, homodimer.

Its subcellular location is the cytoplasm. The catalysed reaction is (2S,6S)-2,6-diaminopimelate = meso-2,6-diaminopimelate. Its pathway is amino-acid biosynthesis; L-lysine biosynthesis via DAP pathway; DL-2,6-diaminopimelate from LL-2,6-diaminopimelate: step 1/1. Its function is as follows. Catalyzes the stereoinversion of LL-2,6-diaminopimelate (L,L-DAP) to meso-diaminopimelate (meso-DAP), a precursor of L-lysine and an essential component of the bacterial peptidoglycan. This is Diaminopimelate epimerase from Mycobacterium ulcerans (strain Agy99).